The primary structure comprises 129 residues: Lysozyme C (129 aa).

Positions 1–129 (KIYKRCELAA…VSTWIKDCKL (129 aa)) constitute a C-type lysozyme domain. 4 disulfides stabilise this stretch: Cys6–Cys127, Cys30–Cys115, Cys64–Cys80, and Cys76–Cys94. Catalysis depends on residues Glu35 and Asp52.

This sequence belongs to the glycosyl hydrolase 22 family. As to quaternary structure, monomer.

The protein resides in the secreted. The enzyme catalyses Hydrolysis of (1-&gt;4)-beta-linkages between N-acetylmuramic acid and N-acetyl-D-glucosamine residues in a peptidoglycan and between N-acetyl-D-glucosamine residues in chitodextrins.. Functionally, lysozymes have primarily a bacteriolytic function; those in tissues and body fluids are associated with the monocyte-macrophage system and enhance the activity of immunoagents. The protein is Lysozyme C (LYZ) of Ortalis vetula (Plain chachalaca).